The primary structure comprises 296 residues: Diaminopimelate epimerase (296 aa).

Residues asparagine 11 and asparagine 78 each coordinate substrate. The Proton donor role is filled by cysteine 87. Residues 88–89 (GN), asparagine 167, asparagine 203, and 221–222 (ER) each bind substrate. Cysteine 230 (proton acceptor) is an active-site residue. Residue 231–232 (GT) participates in substrate binding.

This sequence belongs to the diaminopimelate epimerase family. Homodimer.

The protein localises to the cytoplasm. It catalyses the reaction (2S,6S)-2,6-diaminopimelate = meso-2,6-diaminopimelate. The protein operates within amino-acid biosynthesis; L-lysine biosynthesis via DAP pathway; DL-2,6-diaminopimelate from LL-2,6-diaminopimelate: step 1/1. In terms of biological role, catalyzes the stereoinversion of LL-2,6-diaminopimelate (L,L-DAP) to meso-diaminopimelate (meso-DAP), a precursor of L-lysine and an essential component of the bacterial peptidoglycan. This chain is Diaminopimelate epimerase, found in Mycobacterium leprae (strain Br4923).